Here is a 435-residue protein sequence, read N- to C-terminus: UDP-N-acetylmuramate--L-alanine ligase (435 aa).

108–114 serves as a coordination point for ATP; sequence GSHGKTS.

It belongs to the MurCDEF family.

The protein resides in the cytoplasm. The enzyme catalyses UDP-N-acetyl-alpha-D-muramate + L-alanine + ATP = UDP-N-acetyl-alpha-D-muramoyl-L-alanine + ADP + phosphate + H(+). It functions in the pathway cell wall biogenesis; peptidoglycan biosynthesis. Functionally, cell wall formation. This chain is UDP-N-acetylmuramate--L-alanine ligase, found in Exiguobacterium sp. (strain ATCC BAA-1283 / AT1b).